Here is a 409-residue protein sequence, read N- to C-terminus: Dihydrolipoyllysine-residue succinyltransferase component of 2-oxoglutarate dehydrogenase complex (409 aa).

Positions 2-77 (AIEIKAPTFP…LSNELLGKLN (76 aa)) constitute a Lipoyl-binding domain. Lysine 43 carries the N6-lipoyllysine modification. The Peripheral subunit-binding (PSBD) domain maps to 112-149 (ILSPAARKLAEEAGIDPNSIAGTGKGGRVTKEDVVAAV). Catalysis depends on residues histidine 380 and aspartate 384.

This sequence belongs to the 2-oxoacid dehydrogenase family. As to quaternary structure, forms a 24-polypeptide structural core with octahedral symmetry. Part of the 2-oxoglutarate dehydrogenase (OGDH) complex composed of E1 (2-oxoglutarate dehydrogenase), E2 (dihydrolipoamide succinyltransferase) and E3 (dihydrolipoamide dehydrogenase); the complex contains multiple copies of the three enzymatic components (E1, E2 and E3). Requires (R)-lipoate as cofactor.

It carries out the reaction N(6)-[(R)-dihydrolipoyl]-L-lysyl-[protein] + succinyl-CoA = N(6)-[(R)-S(8)-succinyldihydrolipoyl]-L-lysyl-[protein] + CoA. Its pathway is amino-acid degradation; L-lysine degradation via saccharopine pathway; glutaryl-CoA from L-lysine: step 6/6. Its function is as follows. E2 component of the 2-oxoglutarate dehydrogenase (OGDH) complex which catalyzes the second step in the conversion of 2-oxoglutarate to succinyl-CoA and CO(2). The protein is Dihydrolipoyllysine-residue succinyltransferase component of 2-oxoglutarate dehydrogenase complex (sucB) of Pseudomonas aeruginosa (strain ATCC 15692 / DSM 22644 / CIP 104116 / JCM 14847 / LMG 12228 / 1C / PRS 101 / PAO1).